Consider the following 697-residue polypeptide: Probable glutamine--tRNA ligase (697 aa).

Residues 204–214 carry the 'HIGH' region motif; the sequence is PEPNGILHIGH. ATP contacts are provided by residues 205–207 and 211–217; these read EPN and HIGHAKA. Residues Asp-237 and Tyr-386 each coordinate L-glutamine. ATP-binding positions include Thr-405, 434 to 435, and 442 to 444; these read RL and LSK. The 'KMSKS' region signature appears at 441–445; sequence VLSKR.

The protein belongs to the class-I aminoacyl-tRNA synthetase family.

It catalyses the reaction tRNA(Gln) + L-glutamine + ATP = L-glutaminyl-tRNA(Gln) + AMP + diphosphate. This chain is Probable glutamine--tRNA ligase, found in Encephalitozoon cuniculi (strain GB-M1) (Microsporidian parasite).